We begin with the raw amino-acid sequence, 65 residues long: Transcriptional regulatory protein SenS (65 aa).

Positions 11-31 (RFRKRKTYGNQILPLELLIEK) form a DNA-binding region, H-T-H motif.

This sequence to B.natto SenN.

In terms of biological role, regulates the expression of extracellular-protein genes of Bacillus subtilis. The chain is Transcriptional regulatory protein SenS (senS) from Bacillus subtilis (strain 168).